A 175-amino-acid polypeptide reads, in one-letter code: Cell division protein SepF (175 aa).

Over residues 20–29 (RYEDYDDYDD) the composition is skewed to acidic residues. The tract at residues 20 to 88 (RYEDYDDYDD…ERPTPPLRVT (69 aa)) is disordered. Basic and acidic residues-rich tracts occupy residues 30 to 47 (AEPH…DLGS) and 54 to 73 (RRMD…RRVS).

This sequence belongs to the SepF family. In terms of assembly, homodimer. Interacts with FtsZ.

The protein resides in the cytoplasm. Cell division protein that is part of the divisome complex and is recruited early to the Z-ring. Probably stimulates Z-ring formation, perhaps through the cross-linking of FtsZ protofilaments. Its function overlaps with FtsA. In Acidothermus cellulolyticus (strain ATCC 43068 / DSM 8971 / 11B), this protein is Cell division protein SepF.